The primary structure comprises 125 residues: UPF0231 protein APP7_1023 (125 aa).

Belongs to the UPF0231 family.

The protein is UPF0231 protein APP7_1023 of Actinobacillus pleuropneumoniae serotype 7 (strain AP76).